A 104-amino-acid chain; its full sequence is Transcription factor ILI1 (104 aa).

Positions 1–11 are enriched in basic residues; it reads MSSSRRSRSRR. The segment at 1–27 is disordered; the sequence is MSSSRRSRSRRAGSSVPSSSSSSRTSI. Positions 12–27 are enriched in low complexity; it reads AGSSVPSSSSSSRTSI. The bHLH domain occupies 16-71; sequence VPSSSSSSRTSISEDQIAELLSKLQALLPESQARNGAHRGSAARVLQETCSYIRSL.

Belongs to the bHLH protein family. Interacts with IBH1.

Functionally, atypical and probable non DNA-binding bHLH transcription factor that acts as a positive regulator of cell elongation and plant development. Binds the transcription repressor IBH1 and forms a heterodimer of antagonistic bHLH transcription factors that function downstream of BZR1 to mediate brassinosteroid regulation of cell elongation and lamina inclination. This Oryza sativa subsp. indica (Rice) protein is Transcription factor ILI1 (ILI1).